Here is a 428-residue protein sequence, read N- to C-terminus: Serine--tRNA ligase (428 aa).

Residue 235 to 237 coordinates L-serine; it reads TAE. 266-268 is a binding site for ATP; sequence RSE. Residue Glu-289 participates in L-serine binding. An ATP-binding site is contributed by 353–356; sequence EISS. Ser-389 provides a ligand contact to L-serine.

Belongs to the class-II aminoacyl-tRNA synthetase family. Type-1 seryl-tRNA synthetase subfamily. As to quaternary structure, homodimer. The tRNA molecule binds across the dimer.

Its subcellular location is the cytoplasm. The catalysed reaction is tRNA(Ser) + L-serine + ATP = L-seryl-tRNA(Ser) + AMP + diphosphate + H(+). It catalyses the reaction tRNA(Sec) + L-serine + ATP = L-seryl-tRNA(Sec) + AMP + diphosphate + H(+). The protein operates within aminoacyl-tRNA biosynthesis; selenocysteinyl-tRNA(Sec) biosynthesis; L-seryl-tRNA(Sec) from L-serine and tRNA(Sec): step 1/1. In terms of biological role, catalyzes the attachment of serine to tRNA(Ser). Is also able to aminoacylate tRNA(Sec) with serine, to form the misacylated tRNA L-seryl-tRNA(Sec), which will be further converted into selenocysteinyl-tRNA(Sec). This chain is Serine--tRNA ligase, found in Shewanella woodyi (strain ATCC 51908 / MS32).